A 212-amino-acid chain; its full sequence is Octanoyltransferase (212 aa).

The BPL/LPL catalytic domain maps to Glu30–Gln205. Substrate contacts are provided by residues Arg69–His76, Ser136–Gly138, and Gly149–Ala151. The active-site Acyl-thioester intermediate is Cys167.

This sequence belongs to the LipB family.

The protein localises to the cytoplasm. It catalyses the reaction octanoyl-[ACP] + L-lysyl-[protein] = N(6)-octanoyl-L-lysyl-[protein] + holo-[ACP] + H(+). It participates in protein modification; protein lipoylation via endogenous pathway; protein N(6)-(lipoyl)lysine from octanoyl-[acyl-carrier-protein]: step 1/2. Functionally, catalyzes the transfer of endogenously produced octanoic acid from octanoyl-acyl-carrier-protein onto the lipoyl domains of lipoate-dependent enzymes. Lipoyl-ACP can also act as a substrate although octanoyl-ACP is likely to be the physiological substrate. This chain is Octanoyltransferase, found in Marinobacter nauticus (strain ATCC 700491 / DSM 11845 / VT8) (Marinobacter aquaeolei).